The sequence spans 107 residues: Glutaredoxin 4 (107 aa).

A Glutaredoxin domain is found at 4 to 106 (IDKIKQQINE…TLLKETATKH (103 aa)). Residue Lys21 coordinates glutathione. Cys29 contacts [2Fe-2S] cluster. Residues Arg58, Phe70, and 83-84 (CD) contribute to the glutathione site.

Belongs to the glutaredoxin family. Monothiol subfamily. In terms of assembly, homodimer.

It localises to the cytoplasm. Monothiol glutaredoxin involved in the biogenesis of iron-sulfur clusters. The protein is Glutaredoxin 4 (grxD) of Haemophilus ducreyi (strain 35000HP / ATCC 700724).